The sequence spans 252 residues: MYVIVASLNDPVSRIFLDVIAPTPLVKTEGNIEIRKFVDFPVVVYRGEPTDFSREDILASFGKYAIFISRHEMANPRPLFTVHTPGSWPDVSISNPPLTSSIFRTLCKLAYEPYTCAFEATHHTPNTSYISATFVEVGSTENEWKDRKAVETLAQAVEEVLNSQIKPNTPAMAIGDLHYVTVTDPVLKGELDLGHVIPKYVDISLQVVQNAYLKHTTPIERAILFKKNVKNPARSEIIEFLKSRGVEIITKG.

Belongs to the DtdA deacylase family. In terms of assembly, monomer. Requires Zn(2+) as cofactor.

The catalysed reaction is a D-aminoacyl-tRNA + H2O = a tRNA + a D-alpha-amino acid + H(+). It carries out the reaction glycyl-tRNA(Ala) + H2O = tRNA(Ala) + glycine + H(+). D-aminoacyl-tRNA deacylase with broad substrate specificity. By recycling D-aminoacyl-tRNA to D-amino acids and free tRNA molecules, this enzyme counteracts the toxicity associated with the formation of D-aminoacyl-tRNA entities in vivo. The sequence is that of D-aminoacyl-tRNA deacylase from Pyrobaculum islandicum (strain DSM 4184 / JCM 9189 / GEO3).